Reading from the N-terminus, the 709-residue chain is Ral guanine nucleotide dissociation stimulator-like 3 (709 aa).

The disordered stretch occupies residues 26–55 (VYSVSLRRQRSQRSTPERSGEGQTPIPATD). Residues 64 to 201 (KVRALRAARL…LLEDFLKEAK (138 aa)) enclose the N-terminal Ras-GEF domain. Disordered stretches follow at residues 203-225 (EQTE…TPGS), 395-416 (SQEE…KLPP), and 502-604 (PPAA…SRVP). In terms of domain architecture, Ras-GEF spans 248-503 (SVDDVAEQLT…YRVSRVIEPP (256 aa)). Composition is skewed to low complexity over residues 502 to 511 (PPAASCPSSP) and 533 to 551 (SSPG…SVSP). Residues S506 and S510 each carry the phosphoserine modification. Over residues 552–576 (GSPPSSPRNREPPPPGSPPASPGPQ) the composition is skewed to pro residues. A phosphoserine mark is found at S553, S568, S572, S577, and S600. The tract at residues 611–706 (SEARVIRVSI…KEGTGHTLSA (96 aa)) is interaction with HRAS, MRAS and RIT1. The Ras-associating domain maps to 612–699 (EARVIRVSIN…GDFLLRRKEG (88 aa)).

As to quaternary structure, interacts with GTP-bound forms of RIT1, HRAS and MRAS. Widely expressed. Expressed at high levels in the liver and kidney.

Functionally, guanine nucleotide exchange factor (GEF) for Ral-A. Potential effector of GTPase HRas and Ras-related protein M-Ras. Negatively regulates Elk-1-dependent gene induction downstream of HRas and MEKK1. This is Ral guanine nucleotide dissociation stimulator-like 3 (Rgl3) from Mus musculus (Mouse).